The primary structure comprises 326 residues: MGVHILSTGSSVPNFSVENQQFEDIIETSDHWISTRTGIKKSILPLLLPSLTKLAAEAANDALSKASINAEDIDLIILATSTPDDLFGSASQLQAEIGATSSTAFDITAACSGFIIALVTASQFIQAGSYNKVLVVGADTMSRWIDWSDRSSCILFGDGAGAVLIGESSINSILGFKLCTDGRLNSHLQLMNSPSDSQQFGLTTVPKGRYDSIRMNGKEVYKFAVFQVPIVIKNCLNDVNISIDEVDWFILHQANIRILEAIATRLSIPLSKMITNLENYGNTSAASIPLALDEAIKEKKIQPGQVVVLAGFGAGLTWGAIVLKWQ.

Catalysis depends on residues Cys111 and His252. Residues 253 to 257 (QANIR) form an ACP-binding region. Asn282 is a catalytic residue.

This sequence belongs to the thiolase-like superfamily. FabH family. In terms of assembly, homodimer.

The protein localises to the plastid. It is found in the chloroplast. It catalyses the reaction malonyl-[ACP] + acetyl-CoA + H(+) = 3-oxobutanoyl-[ACP] + CO2 + CoA. Its pathway is lipid metabolism; fatty acid biosynthesis. In terms of biological role, catalyzes the condensation reaction of fatty acid synthesis by the addition to an acyl acceptor of two carbons from malonyl-ACP. Catalyzes the first condensation reaction which initiates fatty acid synthesis and may therefore play a role in governing the total rate of fatty acid production. Possesses both acetoacetyl-ACP synthase and acetyl transacylase activities. Its substrate specificity determines the biosynthesis of branched-chain and/or straight-chain of fatty acids. The chain is Beta-ketoacyl-[acyl-carrier-protein] synthase III from Porphyra umbilicalis (Purple laver).